Consider the following 1040-residue polypeptide: MSLLKMRRHAIHSSDSTSSSSSEDDCFERRTKRNRNRAINRCLPLNFRKDEIRGIYKDRMKIGASLADVDPMQLDTSVRFDSVGGLSSHIAALKEMVVFPLLYPEVFEKFKIQPPRGCLFYGPPGTGKTLVARALANECSRGDKRVAFFMRKGADCLSKWVGESERQLRLLFDQAYQMRPAIIFFDEIDGLAPVRSSRQDQIHSSIVSTLLALMDGLDSRGEIVVIGATNRLDSIDPALRRPGRFDREFLFSLPDKNARKEILKIHTRDWNPKPVDMFLEELAEHCVGYCGADIKSICAEAALCALRRRYPQIYTTSEKLQLDLSSITISAKDFEAALQKIRPASQRAVTSPGQALSAIVKPLLQNTVHRILDALQKVFPHVEVGTNKSLNSDVSCPFLESDLAYSDDDTPSVYENGLSQKENLNFLHLNRNACYQPMSFRPRLLIVGEPGFGQSSHLAPAVIHALEKFTVYTLDIPVLFGISTTSPEEACSQMIREAKRTAPSIVYVPHIHLWWEIVGPTLKATFTTLLQTIPSFAPVLLLATSEKPYSALPEEVQELFTHDYGEIFNVQLPDKEERTKFFEDLILKQASKPPVSQKKAVLQALEVLPVAPPPEPRPLTAEEVKRLEEQEEDTFRELRIFLRNVTHRLAIDKRFRVFTKPVDPDEVPDYVTVIKQPMDLSSVISKIDLHKYLTVKDYLKDIDLICSNALEYNPDRDPGDRLIRHRACALRDTAYAIIKEELDEDFEQLCEEIQESRKKRGCSSSKYAPSYYHVMPKQNSPPVGDKKPDQEQNEKLKVPCTPVACSTPAQLKRKFHKKSKWHVGTKIKRRKISQAKDNSLNAMNSSSRSDTEDSQHTHAEHTEPGNTDESSVEESDKQNRLESNIDLKNNSSSSNIENELEEPKETTEGTELRKDRIVCRGDASASQVTDIPEDSESKEMDFLRMTLARGSQVEQQELISMEQALAILSQPTPSLVLDHKQLTNILKTVVKKSQKYNIFQLENLYAVISQCIYEHRRDYDKTALVQKMEQAVENFNCSRS.

The span at 1-11 shows a compositional bias: basic residues; that stretch reads MSLLKMRRHAI. Positions 1 to 30 are disordered; sequence MSLLKMRRHAIHSSDSTSSSSSEDDCFERR. A Phosphoserine modification is found at serine 65. 122 to 129 is an ATP binding site; sequence GPPGTGKT. Residues serine 401 and serine 406 each carry the phosphoserine modification. Coiled coils occupy residues 619–643 and 735–761; these read LTAE…IFLR and YAII…KKRG. In terms of domain architecture, Bromo spans 629 to 741; the sequence is EQEEDTFREL…DTAYAIIKEE (113 aa). The segment at 772 to 799 is disordered; that stretch reads YHVMPKQNSPPVGDKKPDQEQNEKLKVP. Residues lysine 777 and lysine 797 each participate in a glycyl lysine isopeptide (Lys-Gly) (interchain with G-Cter in SUMO2) cross-link. Residues 784 to 797 show a composition bias toward basic and acidic residues; the sequence is GDKKPDQEQNEKLK. Phosphothreonine is present on residues threonine 801 and threonine 825. Basic residues predominate over residues 811–833; that stretch reads LKRKFHKKSKWHVGTKIKRRKIS. The segment at 811–935 is disordered; sequence LKRKFHKKSK…SQVTDIPEDS (125 aa). A compositionally biased stretch (polar residues) spans 835-848; sequence AKDNSLNAMNSSSR. Residues serine 849, serine 883, and serine 891 each carry the phosphoserine modification. Basic and acidic residues-rich tracts occupy residues 849-863 and 874-885; these read SDTE…EHTE and ESDKQNRLESNI. A compositionally biased stretch (basic and acidic residues) spans 901-919; it reads EEPKETTEGTELRKDRIVC. Serine 951 carries the post-translational modification Phosphoserine. Threonine 972 is modified (phosphothreonine).

Belongs to the AAA ATPase family. In terms of assembly, interacts with ESR1 and NCOA3 and these interactions are enhanced by estradiol. Interacts with acetylated lysine residues on histone H1.4, H2A, H2B and H3 (in vitro).

The protein resides in the nucleus. The catalysed reaction is ATP + H2O = ADP + phosphate + H(+). In terms of biological role, may be a transcriptional coactivator of the nuclear receptor ESR1 required to induce the expression of a subset of estradiol target genes, such as CCND1, MYC and E2F1. May play a role in the recruitment or occupancy of CREBBP at some ESR1 target gene promoters. May be required for histone hyperacetylation. In Mus musculus (Mouse), this protein is ATPase family AAA domain-containing protein 2 (Atad2).